A 186-amino-acid polypeptide reads, in one-letter code: ATP synthase subunit delta (186 aa).

Belongs to the ATPase delta chain family. As to quaternary structure, F-type ATPases have 2 components, F(1) - the catalytic core - and F(0) - the membrane proton channel. F(1) has five subunits: alpha(3), beta(3), gamma(1), delta(1), epsilon(1). F(0) has three main subunits: a(1), b(2) and c(10-14). The alpha and beta chains form an alternating ring which encloses part of the gamma chain. F(1) is attached to F(0) by a central stalk formed by the gamma and epsilon chains, while a peripheral stalk is formed by the delta and b chains.

The protein localises to the cell inner membrane. In terms of biological role, f(1)F(0) ATP synthase produces ATP from ADP in the presence of a proton or sodium gradient. F-type ATPases consist of two structural domains, F(1) containing the extramembraneous catalytic core and F(0) containing the membrane proton channel, linked together by a central stalk and a peripheral stalk. During catalysis, ATP synthesis in the catalytic domain of F(1) is coupled via a rotary mechanism of the central stalk subunits to proton translocation. Its function is as follows. This protein is part of the stalk that links CF(0) to CF(1). It either transmits conformational changes from CF(0) to CF(1) or is implicated in proton conduction. This chain is ATP synthase subunit delta, found in Fuscovulum blasticum (Rhodobacter blasticus).